A 570-amino-acid chain; its full sequence is Glutamate--tRNA ligase (570 aa).

The 'HIGH' region signature appears at 105–115; sequence PNPDGAFHLGN.

It belongs to the class-I aminoacyl-tRNA synthetase family. Glutamate--tRNA ligase type 2 subfamily.

The protein resides in the cytoplasm. It carries out the reaction tRNA(Glu) + L-glutamate + ATP = L-glutamyl-tRNA(Glu) + AMP + diphosphate. Its function is as follows. Catalyzes the attachment of glutamate to tRNA(Glu) in a two-step reaction: glutamate is first activated by ATP to form Glu-AMP and then transferred to the acceptor end of tRNA(Glu). The protein is Glutamate--tRNA ligase of Pyrococcus horikoshii (strain ATCC 700860 / DSM 12428 / JCM 9974 / NBRC 100139 / OT-3).